The chain runs to 506 residues: Tabersonine 3-oxygenase (506 aa).

Residues 1-5 (MEFHE) lie on the Lumenal side of the membrane. A helical membrane pass occupies residues 6 to 26 (SSPFVFITRGFIFIAISIAVL). The Cytoplasmic segment spans residues 27 to 506 (RRIISKKTKT…DLQLIATSYA (480 aa)). Cys-450 contributes to the heme binding site.

It belongs to the cytochrome P450 family. Heme is required as a cofactor. Expressed in leaf epidermis.

The protein localises to the endoplasmic reticulum membrane. It catalyses the reaction 16-methoxytabersonine + reduced [NADPH--hemoprotein reductase] + O2 = (3R)-1,2-didehydro-3-hydroxy-16-methoxy-2,3-dihydrotabersonine + oxidized [NADPH--hemoprotein reductase] + H2O + H(+). It carries out the reaction (-)-tabersonine + reduced [NADPH--hemoprotein reductase] + O2 = (3R)-1,2-didehydro-3-hydroxy-2,3-dihydrotabersonine + oxidized [NADPH--hemoprotein reductase] + H2O + H(+). The protein operates within alkaloid biosynthesis; vindoline biosynthesis. Functionally, cytochrome P450 catalyzing the monooxygenation of 16-methoxytabersonine, 16-hydroxytabersonine and tabersonine, but not of 2,3-dihydrotabersonine. Converts the C2,C3 alkene of tabersonine and 16-methoxytabersonine to the epoxides, which then spontaneously open to form the corresponding imine alcohols. Inactive in converting amyrin to ursolic acid. The sequence is that of Tabersonine 3-oxygenase from Catharanthus roseus (Madagascar periwinkle).